Reading from the N-terminus, the 417-residue chain is Phosphoglycerate kinase, cytosolic (417 aa).

(2R)-3-phosphoglycerate-binding residues include Val23, Asp24, Phe25, Asn26, Arg39, Ser61, His62, Gly64, Arg65, Arg132, His168, and Arg169. Positions 214 and 215 each coordinate ADP. A CDP-binding site is contributed by Gly214. AMP contacts are provided by Ala215 and Lys216. Residue Ala215 participates in ATP binding. Mg(2+) is bound at residue Ala215. Lys216 is a binding site for (2R)-3-phosphoglycerate. Residue Asp219 participates in CDP binding. Position 219 (Asp219) interacts with Mg(2+). Residues Lys220 and Gly238 each contribute to the ADP site. Position 220 (Lys220) interacts with AMP. Lys220 contacts ATP. Gly238 is a CDP binding site. AMP is bound by residues Ala239 and Ala311. The ATP site is built by Ala239 and Ala311. Residues Ala311 and Asn335 each contribute to the ADP site. CDP is bound by residues Gly336 and Phe341. Positions 341, 342, 374, and 375 each coordinate ADP. Glu342 contacts AMP. ATP contacts are provided by Glu342, Asp374, and Ser375. Asp374 contacts Mg(2+).

It belongs to the phosphoglycerate kinase family. In terms of assembly, monomer. It depends on Mg(2+) as a cofactor.

The protein localises to the cytoplasm. It catalyses the reaction (2R)-3-phosphoglycerate + ATP = (2R)-3-phospho-glyceroyl phosphate + ADP. It participates in carbohydrate degradation; glycolysis; pyruvate from D-glyceraldehyde 3-phosphate: step 2/5. In Leishmania major, this protein is Phosphoglycerate kinase, cytosolic (PGKB).